A 336-amino-acid chain; its full sequence is Holliday junction branch migration complex subunit RuvB (336 aa).

The large ATPase domain (RuvB-L) stretch occupies residues serine 4–tyrosine 184. Residues isoleucine 23, arginine 24, glycine 65, lysine 68, threonine 69, threonine 70, glutamate 131–tyrosine 133, arginine 174, tyrosine 184, and arginine 221 each bind ATP. Threonine 69 contacts Mg(2+). The small ATPAse domain (RuvB-S) stretch occupies residues serine 185–glutamate 255. Residues glutamine 258–glutamate 336 are head domain (RuvB-H). Residues arginine 313 and arginine 318 each contribute to the DNA site.

This sequence belongs to the RuvB family. Homohexamer. Forms an RuvA(8)-RuvB(12)-Holliday junction (HJ) complex. HJ DNA is sandwiched between 2 RuvA tetramers; dsDNA enters through RuvA and exits via RuvB. An RuvB hexamer assembles on each DNA strand where it exits the tetramer. Each RuvB hexamer is contacted by two RuvA subunits (via domain III) on 2 adjacent RuvB subunits; this complex drives branch migration. In the full resolvosome a probable DNA-RuvA(4)-RuvB(12)-RuvC(2) complex forms which resolves the HJ.

The protein resides in the cytoplasm. The catalysed reaction is ATP + H2O = ADP + phosphate + H(+). The RuvA-RuvB-RuvC complex processes Holliday junction (HJ) DNA during genetic recombination and DNA repair, while the RuvA-RuvB complex plays an important role in the rescue of blocked DNA replication forks via replication fork reversal (RFR). RuvA specifically binds to HJ cruciform DNA, conferring on it an open structure. The RuvB hexamer acts as an ATP-dependent pump, pulling dsDNA into and through the RuvAB complex. RuvB forms 2 homohexamers on either side of HJ DNA bound by 1 or 2 RuvA tetramers; 4 subunits per hexamer contact DNA at a time. Coordinated motions by a converter formed by DNA-disengaged RuvB subunits stimulates ATP hydrolysis and nucleotide exchange. Immobilization of the converter enables RuvB to convert the ATP-contained energy into a lever motion, pulling 2 nucleotides of DNA out of the RuvA tetramer per ATP hydrolyzed, thus driving DNA branch migration. The RuvB motors rotate together with the DNA substrate, which together with the progressing nucleotide cycle form the mechanistic basis for DNA recombination by continuous HJ branch migration. Branch migration allows RuvC to scan DNA until it finds its consensus sequence, where it cleaves and resolves cruciform DNA. The sequence is that of Holliday junction branch migration complex subunit RuvB from Legionella pneumophila subsp. pneumophila (strain Philadelphia 1 / ATCC 33152 / DSM 7513).